The chain runs to 725 residues: Fatty acid oxidation complex subunit alpha (725 aa).

Residues Met-1–Lys-189 form an enoyl-CoA hydratase/isomerase region. Residue Asp-296 coordinates substrate. Residues Glu-311–Leu-725 form a 3-hydroxyacyl-CoA dehydrogenase region. Residues Met-324, Asp-343, Val-400 to Glu-402, Lys-407, and Ser-429 each bind NAD(+). Catalysis depends on His-450, which acts as the For 3-hydroxyacyl-CoA dehydrogenase activity. Asn-453 lines the NAD(+) pocket. Substrate-binding residues include Asn-500 and Tyr-660.

It in the N-terminal section; belongs to the enoyl-CoA hydratase/isomerase family. This sequence in the C-terminal section; belongs to the 3-hydroxyacyl-CoA dehydrogenase family. As to quaternary structure, heterotetramer of two alpha chains (FadB) and two beta chains (FadA).

It catalyses the reaction a (3S)-3-hydroxyacyl-CoA + NAD(+) = a 3-oxoacyl-CoA + NADH + H(+). The catalysed reaction is a (3S)-3-hydroxyacyl-CoA = a (2E)-enoyl-CoA + H2O. The enzyme catalyses a 4-saturated-(3S)-3-hydroxyacyl-CoA = a (3E)-enoyl-CoA + H2O. It carries out the reaction (3S)-3-hydroxybutanoyl-CoA = (3R)-3-hydroxybutanoyl-CoA. It catalyses the reaction a (3Z)-enoyl-CoA = a 4-saturated (2E)-enoyl-CoA. The catalysed reaction is a (3E)-enoyl-CoA = a 4-saturated (2E)-enoyl-CoA. It functions in the pathway lipid metabolism; fatty acid beta-oxidation. Involved in the aerobic and anaerobic degradation of long-chain fatty acids via beta-oxidation cycle. Catalyzes the formation of 3-oxoacyl-CoA from enoyl-CoA via L-3-hydroxyacyl-CoA. It can also use D-3-hydroxyacyl-CoA and cis-3-enoyl-CoA as substrate. The polypeptide is Fatty acid oxidation complex subunit alpha (Salmonella paratyphi A (strain ATCC 9150 / SARB42)).